We begin with the raw amino-acid sequence, 308 residues long: Protein translocase subunit SecF (308 aa).

6 helical membrane passes run 10–30 (LFFAISLAMIIPGLIVMAIFG), 129–149 (LAVSIAALAVIIYITWAFRGV), 160–180 (IIAMIHDVLVVISLVSIGGVL), 181–201 (FGWQVDALFLTALLSVIGFSV), 241–261 (TQLMTVEYMLLAIALFGGITL), and 264–284 (FAIILLVGLFMGTYSSIFIAA).

The protein belongs to the SecD/SecF family. SecF subfamily. As to quaternary structure, forms a complex with SecD. Part of the essential Sec protein translocation apparatus which comprises SecA, SecYEG and auxiliary proteins SecDF. Other proteins may also be involved.

It is found in the cell membrane. In terms of biological role, part of the Sec protein translocase complex. Interacts with the SecYEG preprotein conducting channel. SecDF uses the proton motive force (PMF) to complete protein translocation after the ATP-dependent function of SecA. In Anaerolinea thermophila (strain DSM 14523 / JCM 11388 / NBRC 100420 / UNI-1), this protein is Protein translocase subunit SecF.